Consider the following 338-residue polypeptide: MSLILSNVILHKLVKNEQDELEVCLRNQLLENEEFTEALVSELHRVFNSKAGKGFGIFKTESEFGHWLGSVRKNETPFLEFSNKSAEKLKSELIKYPFAEEGILVIAEYQSLATEYLFVAVLPSNESMKVTDELNISATDYLDIAKMDIAARIDLSTWETDSDSNRYLTFIKGRVGRKVSDFFLDFLQADVGMDTKVQNQVLMQAVEDFCADERLEKEEKQQYRKQVYDYCNGQLQAGEELTVKELSGELPTSESGSNFYQFAEEQGYELEESFPVDRTALRKLTKFVGAGGGLSLNFDAMLLGERVFYDPETDTLTIKGTPPNLKDQLTRRLGSSES.

A disordered region spans residues 319–338 (KGTPPNLKDQLTRRLGSSES).

It belongs to the YejK family.

It localises to the cytoplasm. It is found in the nucleoid. The protein is Nucleoid-associated protein VSAL_I1059 of Aliivibrio salmonicida (strain LFI1238) (Vibrio salmonicida (strain LFI1238)).